The chain runs to 368 residues: 1-deoxy-D-xylulose 5-phosphate reductoisomerase (368 aa).

Residues Thr-7, Gly-8, Ser-9, Ile-10, Gly-31, Lys-32, Asn-33, and Asn-113 each contribute to the NADPH site. Position 114 (Lys-114) interacts with 1-deoxy-D-xylulose 5-phosphate. An NADPH-binding site is contributed by Glu-115. Asp-133 is a binding site for Mn(2+). Positions 134, 135, 158, and 181 each coordinate 1-deoxy-D-xylulose 5-phosphate. Glu-135 is a binding site for Mn(2+). Gly-187 contacts NADPH. 1-deoxy-D-xylulose 5-phosphate is bound by residues Ser-194, Asn-199, Lys-200, and Glu-203. Residue Glu-203 participates in Mn(2+) binding.

The protein belongs to the DXR family. The cofactor is Mg(2+). Mn(2+) serves as cofactor.

It catalyses the reaction 2-C-methyl-D-erythritol 4-phosphate + NADP(+) = 1-deoxy-D-xylulose 5-phosphate + NADPH + H(+). The protein operates within isoprenoid biosynthesis; isopentenyl diphosphate biosynthesis via DXP pathway; isopentenyl diphosphate from 1-deoxy-D-xylulose 5-phosphate: step 1/6. In terms of biological role, catalyzes the NADPH-dependent rearrangement and reduction of 1-deoxy-D-xylulose-5-phosphate (DXP) to 2-C-methyl-D-erythritol 4-phosphate (MEP). In Helicobacter pylori (strain HPAG1), this protein is 1-deoxy-D-xylulose 5-phosphate reductoisomerase.